We begin with the raw amino-acid sequence, 570 residues long: BRICHOS domain-containing protein C09F5.1 (570 aa).

The Cytoplasmic portion of the chain corresponds to 1-288 (MVVEQIEVIE…YTPELLRSLC (288 aa)). Polar residues-rich tracts occupy residues 93 to 107 (SGATNSSFLNTSGDS) and 228 to 246 (TSTLNSRRFPPQSQTSLVS). Disordered stretches follow at residues 93–116 (SGATNSSFLNTSGDSRVSYPGADR) and 218–248 (SSWDGDEKKMTSTLNSRRFPPQSQTSLVSRE). Residues 289-309 (CILLLLLLLLFLMFIIFNAIF) traverse the membrane as a helical segment. At 310-570 (NRYAVSEFLL…RKSINNATLV (261 aa)) the chain is on the extracellular side. The region spanning 369–461 (TAVDFNTGYV…IDDCEGAQWY (93 aa)) is the BRICHOS domain. Cys-395 and Cys-455 form a disulfide bridge.

It is found in the membrane. In Caenorhabditis elegans, this protein is BRICHOS domain-containing protein C09F5.1.